Consider the following 267-residue polypeptide: Kit ligand (267 aa).

The signal sequence occupies residues 1 to 25 (MKKTQTWIITCIYLQLLLFNPLVHT). Gln-26 carries the pyrrolidone carboxylic acid modification. Residues 26 to 215 (QGICRNRVTD…SNSIEDSSLQ (190 aa)) are Extracellular-facing. Intrachain disulfides connect Cys-29–Cys-114 and Cys-68–Cys-164. Residues Asn-90, Asn-97, Asn-145, and Asn-196 are each glycosylated (N-linked (GlcNAc...) asparagine). A helical transmembrane segment spans residues 216–238 (WAAVALPAFFSLVIGFAFGALYW). The Cytoplasmic portion of the chain corresponds to 239 to 267 (KKKQPNLTRTVENRQINEEDNEISMLQEK).

The protein belongs to the SCF family. In terms of assembly, homodimer, non-covalently linked. Heterotetramer with KIT, binding two KIT molecules; thereby mediates KIT dimerization and subsequent activation by autophosphorylation. Post-translationally, a soluble form is produced by proteolytic processing of the extracellular domain.

The protein localises to the cytoplasm. The protein resides in the cytoskeleton. Its subcellular location is the cell membrane. It is found in the cell projection. It localises to the lamellipodium. The protein localises to the filopodium. The protein resides in the secreted. Functionally, ligand for the receptor-type protein-tyrosine kinase KIT. Plays an essential role in the regulation of cell survival and proliferation, hematopoiesis, stem cell maintenance, gametogenesis, mast cell development, migration and function, and in melanogenesis. KITLG/SCF binding can activate several signaling pathways. Promotes phosphorylation of PIK3R1, the regulatory subunit of phosphatidylinositol 3-kinase, and subsequent activation of the kinase AKT1. KITLG/SCF and KIT also transmit signals via GRB2 and activation of RAS, RAF1 and the MAP kinases MAPK1/ERK2 and/or MAPK3/ERK1. KITLG/SCF and KIT promote activation of STAT family members STAT1, STAT3 and STAT5. KITLG/SCF and KIT promote activation of PLCG1, leading to the production of the cellular signaling molecules diacylglycerol and inositol 1,4,5-trisphosphate. KITLG/SCF acts synergistically with other cytokines, probably interleukins. The chain is Kit ligand (KITLG) from Ovis aries (Sheep).